The sequence spans 852 residues: Aconitate hydratase B (852 aa).

Substrate is bound by residues Arg-194, 237-239 (SSR), 405-407 (QDT), and Ser-489. Residues Cys-708, Cys-766, and Cys-769 each contribute to the [4Fe-4S] cluster site. Substrate contacts are provided by Arg-788 and Arg-793.

It belongs to the aconitase/IPM isomerase family. As to quaternary structure, monomer. Requires [4Fe-4S] cluster as cofactor.

It carries out the reaction citrate = D-threo-isocitrate. The catalysed reaction is (2S,3R)-3-hydroxybutane-1,2,3-tricarboxylate = 2-methyl-cis-aconitate + H2O. It participates in carbohydrate metabolism; tricarboxylic acid cycle; isocitrate from oxaloacetate: step 2/2. It functions in the pathway organic acid metabolism; propanoate degradation. Its function is as follows. Involved in the catabolism of short chain fatty acids (SCFA) via the tricarboxylic acid (TCA)(acetyl degradation route) and probably via the 2-methylcitrate cycle I (propionate degradation route). Catalyzes the reversible isomerization of citrate to isocitrate via cis-aconitate. Catalyzes the hydration of 2-methyl-cis-aconitate to yield (2R,3S)-2-methylisocitrate. The apo form of AcnB functions as a RNA-binding regulatory protein. The chain is Aconitate hydratase B (acnB) from Helicobacter pylori (strain J99 / ATCC 700824) (Campylobacter pylori J99).